Consider the following 559-residue polypeptide: 3-aminoavenalumate diazotase (559 aa).

Residue serine 181 participates in Mg(2+) binding. Residues alanine 227, glycine 332, and serine 336 each contribute to the ATP site. Glutamate 337 lines the Mg(2+) pocket. Residues aspartate 416 and arginine 437 each coordinate ATP.

This sequence belongs to the ATP-dependent AMP-binding enzyme family. Mg(2+) serves as cofactor.

It catalyses the reaction 3-aminoavenalumate + nitrite + ATP = 3-diazoavenalumate + AMP + diphosphate + H2O. The enzyme catalyses (E)-3-aminocoumarate + nitrite + ATP + H(+) = (E)-3-diazocoumarate + AMP + diphosphate + H2O. It carries out the reaction 3-amino-4-hydroxybenzoate + nitrite + ATP + H(+) = 3-diazo-4-hydroxybenzoate + AMP + diphosphate + H2O. Functionally, ligase involved in the biosynthesis of avenalumic acid (AVA). Catalyzes the diazotization of 3-aminoavenalumic acid (3-AAA) to 3-diazoavenalumic acid (3-DAA). It can also act on 3-aminocoumaric acid (3-ACA) and 3-amino-4-hydroxybenzoic acid (3,4-AHBA) with lower activity. The chain is 3-aminoavenalumate diazotase from Streptomyces sp.